Reading from the N-terminus, the 288-residue chain is Protease HtpX homolog (288 aa).

2 helical membrane-spanning segments follow: residues 6 to 26 and 28 to 48; these read TAFL…YVGG and QGMM…YFFS. A Zn(2+)-binding site is contributed by histidine 130. Residue glutamate 131 is part of the active site. Histidine 134 provides a ligand contact to Zn(2+). The next 2 helical transmembrane spans lie at 140–160 and 179–199; these read ILTG…ANFA and VIML…QMAI. Residue glutamate 204 coordinates Zn(2+).

It belongs to the peptidase M48B family. Zn(2+) serves as cofactor.

It is found in the cell inner membrane. This is Protease HtpX homolog from Campylobacter concisus (strain 13826).